The following is a 378-amino-acid chain: Small ribosomal subunit protein bS1 (378 aa).

S1 motif domains follow at residues 1–66, 87–155, 172–242, 259–329, and 346–378; these read ETVT…VSRR, GMEV…LGLK, GTKL…LGLK, GDRV…LGVK, and GAIVTGKVTAVDAKGATVELTLGVEGYLRASEA.

The protein belongs to the bacterial ribosomal protein bS1 family.

Binds mRNA; thus facilitating recognition of the initiation point. It is needed to translate mRNA with a short Shine-Dalgarno (SD) purine-rich sequence. The protein is Small ribosomal subunit protein bS1 (rpsA) of Providencia sp.